The sequence spans 109 residues: Mitochondrial pyruvate carrier 1 (109 aa).

The residue at position 2 (Ala-2) is an N-acetylalanine. Over 2–20 the chain is Mitochondrial matrix; it reads AGALVRKAADYVRSKDFRD. A helical membrane pass occupies residues 21 to 41; sequence YLMSTHFWGPVANWGLPIAAI. The Mother cell cytoplasmic portion of the chain corresponds to 42–52; the sequence is NDMKKSPEIIS. The chain crosses the membrane as a helical span at residues 53–71; sequence GRMTFALCCYSLTFMRFAY. N6-acetyllysine is present on Lys-72. Over 72–109 the chain is Mitochondrial matrix; it reads KVQPRNWLLFACHATNEVAQLIQGGRLIRHEMSKKASA.

Homodimer. Forms heterodimer with MPC2. The heterodimer is the more stable and dominant form.

It localises to the mitochondrion inner membrane. The enzyme catalyses pyruvate(out) + H(+)(out) = pyruvate(in) + H(+)(in). Mediates the uptake of pyruvate into mitochondria. The protein is Mitochondrial pyruvate carrier 1 (MPC1) of Bos taurus (Bovine).